We begin with the raw amino-acid sequence, 375 residues long: MAKADFYETLGVAKSADEKELKSAFRKLAMKYHPDKNPDDKDAERKFKEINEAYEMLKDPQKRAAYDRYGHAAFEHGGMGGGGGGFAGGGFSDIFEDIFGEMMGGGRARQRSSGGRERGADLRYNMEITLEESFSGKTAQIRVPTSITCDVCSGSGAKPGTQPKNCGTCQGTGRVRAAQGFFSIERTCPTCHGRGQIIPDPCPKCHGQGRVTEERSLSVNIPAGIEDGTRIRLQGEGEAGARGGPAGDLYIFLSVKPHEFYQRDGADLYCAVPISMTTAALGGTFDVATLDGTKSRVTVPEGTQVGKQFRLKGKGMPVLRSVQTGDLYIQIQIETPQKLTKRQRELLQEFEQLSSKENNPESTGFFARMKEFFEG.

Positions 5–70 (DFYETLGVAK…QKRAAYDRYG (66 aa)) constitute a J domain. Residues 136–214 (GKTAQIRVPT…CHGQGRVTEE (79 aa)) form a CR-type zinc finger. The Zn(2+) site is built by C149, C152, C166, C169, C188, C191, C202, and C205. 4 CXXCXGXG motif repeats span residues 149–156 (CDVCSGSG), 166–173 (CGTCQGTG), 188–195 (CPTCHGRG), and 202–209 (CPKCHGQG).

Belongs to the DnaJ family. In terms of assembly, homodimer. Zn(2+) is required as a cofactor.

The protein resides in the cytoplasm. Its function is as follows. Participates actively in the response to hyperosmotic and heat shock by preventing the aggregation of stress-denatured proteins and by disaggregating proteins, also in an autonomous, DnaK-independent fashion. Unfolded proteins bind initially to DnaJ; upon interaction with the DnaJ-bound protein, DnaK hydrolyzes its bound ATP, resulting in the formation of a stable complex. GrpE releases ADP from DnaK; ATP binding to DnaK triggers the release of the substrate protein, thus completing the reaction cycle. Several rounds of ATP-dependent interactions between DnaJ, DnaK and GrpE are required for fully efficient folding. Also involved, together with DnaK and GrpE, in the DNA replication of plasmids through activation of initiation proteins. The chain is Chaperone protein DnaJ from Rhizobium johnstonii (strain DSM 114642 / LMG 32736 / 3841) (Rhizobium leguminosarum bv. viciae).